A 493-amino-acid polypeptide reads, in one-letter code: Cobyric acid synthase (493 aa).

Residues 246-440 (PIDIAVIKMP…IHGVFDGIVF (195 aa)) form the GATase cobBQ-type domain. The active-site Nucleophile is the Cys326. The active site involves His432.

The protein belongs to the CobB/CobQ family. CobQ subfamily.

It participates in cofactor biosynthesis; adenosylcobalamin biosynthesis. Its function is as follows. Catalyzes amidations at positions B, D, E, and G on adenosylcobyrinic A,C-diamide. NH(2) groups are provided by glutamine, and one molecule of ATP is hydrogenolyzed for each amidation. In Clostridium botulinum (strain 657 / Type Ba4), this protein is Cobyric acid synthase.